The chain runs to 179 residues: MSVENLKNSLPEYAKDLKLNLSSIARTTVLNEQQLWGTLLATAAATKSASTLKEIASEAADNLSAEAYNAALGAASIMGMNNVFYRTKGYLDGKYDDLRAGLRMNIIGNPGVDKADFELWSLAVSAINGCNHCLEAHENTLRQEGVDREVIFEAIRAGSIVAGVAQAVEANEILSAAQV.

Cys130 serves as the catalytic Proton donor. Residues Cys130 and Cys133 are joined by a disulfide bond. Residue Cys133 is the Cysteine sulfenic acid (-SOH) intermediate of the active site.

It belongs to the AhpD family. In terms of assembly, homotrimer.

The enzyme catalyses N(6)-[(R)-dihydrolipoyl]-L-lysyl-[lipoyl-carrier protein] + a hydroperoxide = N(6)-[(R)-lipoyl]-L-lysyl-[lipoyl-carrier protein] + an alcohol + H2O. Its function is as follows. Antioxidant protein with alkyl hydroperoxidase activity. Required for the reduction of the AhpC active site cysteine residues and for the regeneration of the AhpC enzyme activity. This is Alkyl hydroperoxide reductase AhpD from Rhodococcus erythropolis (strain PR4 / NBRC 100887).